The following is a 307-amino-acid chain: UDP-3-O-acyl-N-acetylglucosamine deacetylase (307 aa).

3 residues coordinate Zn(2+): histidine 78, histidine 241, and aspartate 245. Residue histidine 268 is the Proton donor of the active site.

The protein belongs to the LpxC family. Zn(2+) serves as cofactor.

It catalyses the reaction a UDP-3-O-[(3R)-3-hydroxyacyl]-N-acetyl-alpha-D-glucosamine + H2O = a UDP-3-O-[(3R)-3-hydroxyacyl]-alpha-D-glucosamine + acetate. Its pathway is glycolipid biosynthesis; lipid IV(A) biosynthesis; lipid IV(A) from (3R)-3-hydroxytetradecanoyl-[acyl-carrier-protein] and UDP-N-acetyl-alpha-D-glucosamine: step 2/6. Its function is as follows. Catalyzes the hydrolysis of UDP-3-O-myristoyl-N-acetylglucosamine to form UDP-3-O-myristoylglucosamine and acetate, the committed step in lipid A biosynthesis. This is UDP-3-O-acyl-N-acetylglucosamine deacetylase from Bordetella bronchiseptica (strain ATCC BAA-588 / NCTC 13252 / RB50) (Alcaligenes bronchisepticus).